A 57-amino-acid polypeptide reads, in one-letter code: Ribulose bisphosphate carboxylase large chain (57 aa).

The propeptide occupies 1–2; it reads MS. An N-acetylproline modification is found at Pro-3. An N6,N6,N6-trimethyllysine modification is found at Lys-14.

The protein belongs to the RuBisCO large chain family. Type I subfamily. Heterohexadecamer of 8 large chains and 8 small chains.

Its subcellular location is the plastid. It localises to the chloroplast. The enzyme catalyses 2 (2R)-3-phosphoglycerate + 2 H(+) = D-ribulose 1,5-bisphosphate + CO2 + H2O. The catalysed reaction is D-ribulose 1,5-bisphosphate + O2 = 2-phosphoglycolate + (2R)-3-phosphoglycerate + 2 H(+). Functionally, ruBisCO catalyzes two reactions: the carboxylation of D-ribulose 1,5-bisphosphate, the primary event in carbon dioxide fixation, as well as the oxidative fragmentation of the pentose substrate in the photorespiration process. Both reactions occur simultaneously and in competition at the same active site. The protein is Ribulose bisphosphate carboxylase large chain (rbcL) of Buxus sempervirens (Common box).